The following is a 549-amino-acid chain: Hydroxylamine reductase (549 aa).

Cys3, Cys6, Cys15, and Cys21 together coordinate [4Fe-4S] cluster. 8 residues coordinate hybrid [4Fe-2O-2S] cluster: His244, Glu268, Cys313, Cys405, Cys433, Cys458, Glu492, and Lys494. A Cysteine persulfide modification is found at Cys405.

Belongs to the HCP family. It depends on [4Fe-4S] cluster as a cofactor. Requires hybrid [4Fe-2O-2S] cluster as cofactor.

The protein resides in the cytoplasm. It carries out the reaction A + NH4(+) + H2O = hydroxylamine + AH2 + H(+). Catalyzes the reduction of hydroxylamine to form NH(3) and H(2)O. The chain is Hydroxylamine reductase from Crocosphaera subtropica (strain ATCC 51142 / BH68) (Cyanothece sp. (strain ATCC 51142)).